The sequence spans 248 residues: UPF0736 protein BCE_1296 (248 aa).

The protein belongs to the UPF0736 family.

This is UPF0736 protein BCE_1296 from Bacillus cereus (strain ATCC 10987 / NRS 248).